A 239-amino-acid chain; its full sequence is uncharacterized protein (239 aa).

It localises to the endoplasmic reticulum. The protein localises to the golgi apparatus. This is an uncharacterized protein from Schizosaccharomyces pombe (strain 972 / ATCC 24843) (Fission yeast).